Consider the following 419-residue polypeptide: MRAVGLITEYNPFHNGHLHHLRASREAAGAEVAVAVMSGHFLQRGEPALLDKWRRAEMALRCGVDVVVELPFPFACASAPHFARGAVQCLDALGVDSLCFGSESGDLGALQRCAQLLEECGEQVAERTATLLRRGMHYAAARSQVCAELSGCDAATLPLHQPNNILGIEYLRALRATGSAMQPFTISRLGAGYHDDAVGPGNIASASGIRKRLAMGETVDELLPAPAVDVVAGARADRLFPDEDLLHRLLLAQIFRGRDYLQSLYQVESGIDARLTDAAATSRDWQALVDAVKVRQFTRTRIQRTLMYILNDVRGDLMASLLAAGPLYLRLLGSSPRGRAFLGAARKRRRLPMVTNLSRIYSQLKRTYGPRSEDYRLALAMLELDLRATRNYSLLLPGWSGVSRERDFFEAPLDIHSAI.

ATP-binding positions include 7-20 (ITEY…HLHH), glycine 101, asparagine 163, and arginine 188.

The protein belongs to the TmcAL family.

It is found in the cytoplasm. It carries out the reaction cytidine(34) in elongator tRNA(Met) + acetate + ATP = N(4)-acetylcytidine(34) in elongator tRNA(Met) + AMP + diphosphate. Functionally, catalyzes the formation of N(4)-acetylcytidine (ac(4)C) at the wobble position of elongator tRNA(Met), using acetate and ATP as substrates. First activates an acetate ion to form acetyladenylate (Ac-AMP) and then transfers the acetyl group to tRNA to form ac(4)C34. The protein is tRNA(Met) cytidine acetate ligase of Syntrophotalea carbinolica (strain DSM 2380 / NBRC 103641 / GraBd1) (Pelobacter carbinolicus).